The following is a 223-amino-acid chain: Phosphoribosylformylglycinamidine synthase subunit PurQ (223 aa).

The Glutamine amidotransferase type-1 domain maps to 2–223 (KFAVIQFPGS…ASVLKNFVGK (222 aa)). The active-site Nucleophile is cysteine 86. Catalysis depends on residues histidine 195 and glutamate 197.

Part of the FGAM synthase complex composed of 1 PurL, 1 PurQ and 2 PurS subunits.

It localises to the cytoplasm. It catalyses the reaction N(2)-formyl-N(1)-(5-phospho-beta-D-ribosyl)glycinamide + L-glutamine + ATP + H2O = 2-formamido-N(1)-(5-O-phospho-beta-D-ribosyl)acetamidine + L-glutamate + ADP + phosphate + H(+). The catalysed reaction is L-glutamine + H2O = L-glutamate + NH4(+). Its pathway is purine metabolism; IMP biosynthesis via de novo pathway; 5-amino-1-(5-phospho-D-ribosyl)imidazole from N(2)-formyl-N(1)-(5-phospho-D-ribosyl)glycinamide: step 1/2. Its function is as follows. Part of the phosphoribosylformylglycinamidine synthase complex involved in the purines biosynthetic pathway. Catalyzes the ATP-dependent conversion of formylglycinamide ribonucleotide (FGAR) and glutamine to yield formylglycinamidine ribonucleotide (FGAM) and glutamate. The FGAM synthase complex is composed of three subunits. PurQ produces an ammonia molecule by converting glutamine to glutamate. PurL transfers the ammonia molecule to FGAR to form FGAM in an ATP-dependent manner. PurS interacts with PurQ and PurL and is thought to assist in the transfer of the ammonia molecule from PurQ to PurL. This chain is Phosphoribosylformylglycinamidine synthase subunit PurQ, found in Lactococcus lactis subsp. lactis (strain IL1403) (Streptococcus lactis).